Reading from the N-terminus, the 366-residue chain is UDP-N-acetylenolpyruvoylglucosamine reductase (366 aa).

The FAD-binding PCMH-type domain occupies 29–203 (VGPVARTLVT…LEVEFALDAS (175 aa)). Arg177 is a catalytic residue. Ser258 acts as the Proton donor in catalysis. Residue Glu358 is part of the active site.

The protein belongs to the MurB family. FAD serves as cofactor.

Its subcellular location is the cytoplasm. It carries out the reaction UDP-N-acetyl-alpha-D-muramate + NADP(+) = UDP-N-acetyl-3-O-(1-carboxyvinyl)-alpha-D-glucosamine + NADPH + H(+). It functions in the pathway cell wall biogenesis; peptidoglycan biosynthesis. Cell wall formation. The sequence is that of UDP-N-acetylenolpyruvoylglucosamine reductase from Mycobacterium ulcerans (strain Agy99).